The primary structure comprises 483 residues: Endoplasmic reticulum lectin 1 (483 aa).

The N-terminal stretch at 1–33 (MEEGDGGLRSLVPGGPLLLVLYGLLEASGGGRA) is a signal peptide. 2 consecutive MRH domains span residues 111 to 246 (SSCS…LCSH) and 342 to 469 (SYCF…ICKI). Cysteine 113 and cysteine 126 form a disulfide bridge. A glycan (N-linked (GlcNAc...) asparagine) is linked at asparagine 195. 5 cysteine pairs are disulfide-bonded: cysteine 199-cysteine 232, cysteine 215-cysteine 244, cysteine 344-cysteine 357, cysteine 421-cysteine 455, and cysteine 436-cysteine 467.

May form a complex with OS9, HSPA5, SYVN1, and SEL1L with which it interacts directly. Interacts (via PRKCSH 2 domain) with KREMEN2 (when glycosylated). Interacts with HSPA5. N-glycosylated.

The protein resides in the endoplasmic reticulum lumen. Functionally, probable lectin that binds selectively to improperly folded lumenal proteins. May function in endoplasmic reticulum quality control and endoplasmic reticulum-associated degradation (ERAD) of both non-glycosylated proteins and glycoproteins. The protein is Endoplasmic reticulum lectin 1 (Erlec1) of Mus musculus (Mouse).